The primary structure comprises 79 residues: uncharacterized protein (79 aa).

An N-terminal signal peptide occupies residues Met1–Ala19. The segment at Arg52–Ser71 is disordered. Polar residues predominate over residues Thr58–Ser71.

In terms of tissue distribution, nacreous layer of shell (at protein level). Expressed primarily in the mantle with highest level in the mantle pallium and lower level in the mantle edge.

The protein resides in the secreted. This is an uncharacterized protein from Margaritifera margaritifera (Freshwater pearl mussel).